A 562-amino-acid polypeptide reads, in one-letter code: Cytochrome c oxidase subunit 1 (562 aa).

The helical transmembrane segment at 21 to 41 threads the bilayer; it reads TLYFLVLGFLALIVGSLFGPF. A Fe(II)-heme a-binding site is contributed by histidine 72. Transmembrane regions (helical) follow at residues 74-94, 105-125, 144-164, 187-207, 227-247, 267-287, 300-320, and 345-365; these read VLNA…YLPA, LMWL…LPLL, AFYL…YIVL, VVFW…AVLF, LFWW…YAII, LAFL…QFAD, VLTL…AASL, and AFVA…GGIV. Residues histidine 233, tyrosine 237, histidine 282, and histidine 283 each contribute to the Cu cation site. A cross-link (1'-histidyl-3'-tyrosine (His-Tyr)) is located at residues 233 to 237; it reads HPIVY. Histidine 384 contacts heme a3. 4 helical membrane passes run 385 to 405, 420 to 440, 471 to 491, and 527 to 547; these read FHLQ…YWLL, LGLA…VGLH, VLAG…LFSV, and IGFW…PTLV. Histidine 386 is a binding site for Fe(II)-heme a.

Belongs to the heme-copper respiratory oxidase family. Heme is required as a cofactor. Cu cation serves as cofactor.

It localises to the cell membrane. It carries out the reaction 4 Fe(II)-[cytochrome c] + O2 + 8 H(+)(in) = 4 Fe(III)-[cytochrome c] + 2 H2O + 4 H(+)(out). It participates in energy metabolism; oxidative phosphorylation. The polypeptide is Cytochrome c oxidase subunit 1 (cbaA) (Thermus thermophilus (strain ATCC 27634 / DSM 579 / HB8)).